The following is a 79-amino-acid chain: uncharacterized protein (79 aa).

The interval M1–D37 is disordered.

This is an uncharacterized protein from Bacillus subtilis (strain 168).